Consider the following 2499-residue polypeptide: Probable polyketide synthase 22 (2499 aa).

The Ketosynthase family 3 (KS3) domain occupies 11-430 (DNQVAIVGLG…GSNACVLLSE (420 aa)). Residues Cys177, His316, and His354 each act as for beta-ketoacyl synthase activity in the active site. Positions 623–656 (GITPSIIVGHSLGEVASAFCSGMIDLETACFVIY) are acyl/malonyl transferases. Ser633 serves as the catalytic For acyl/malonyl transferase activity. The interval 922–1044 (APINQLGNKN…SRILMKSLDV (123 aa)) is N-terminal hotdog fold. A PKS/mFAS DH domain is found at 922–1209 (APINQLGNKN…IASTLSTKSE (288 aa)). His956 (proton acceptor; for dehydratase activity) is an active-site residue. The C-terminal hotdog fold stretch occupies residues 1059–1209 (NWSTLKREQL…IASTLSTKSE (151 aa)). Asp1121 acts as the Proton donor; for dehydratase activity in catalysis. Positions 2414–2491 (EKEFSIRQDI…QIINIVTTKV (78 aa)) constitute a Carrier domain. The residue at position 2451 (Ser2451) is an O-(pantetheine 4'-phosphoryl)serine.

It depends on pantetheine 4'-phosphate as a cofactor.

Functionally, probable polyketide synthase. This chain is Probable polyketide synthase 22 (pks22), found in Dictyostelium discoideum (Social amoeba).